Here is a 406-residue protein sequence, read N- to C-terminus: Sensor histidine kinase YxjM (406 aa).

The Cytoplasmic portion of the chain corresponds to 1 to 13 (MNGQTPARHYYKK). A helical membrane pass occupies residues 14-34 (LVPSLILILNCIQFLSHPTKA). The Extracellular portion of the chain corresponds to 35–36 (DP). The helical transmembrane segment at 37–57 (ILLAFVFAVYLAFIWIIPYVA) threads the bilayer. Position 58 (Ser-58) is a topological domain, cytoplasmic. Helical transmembrane passes span 59 to 79 (TAVSLSIFIGLWLLTDFFWAV) and 80 to 100 (SGQEQGAAYFLIVFLMIYAAF). Residue Arg-101 is a topological domain, cytoplasmic. The helical transmembrane segment at 102–122 (LPSRLSLIFTACLIGGNILLL) threads the bilayer. Over 123–125 (SSQ) the chain is Extracellular. The helical transmembrane segment at 126–146 (GGSLNTIISNISIMLGLYVLF) threads the bilayer. At 147 to 406 (SSMRFRREAR…TNKEQKDEQR (260 aa)) the chain is on the cytoplasmic side. Residues 209 to 396 (DIHDSIGHEL…KIELSLPLMT (188 aa)) form the Histidine kinase domain. His-211 bears the Phosphohistidine; by autocatalysis mark.

Its subcellular location is the cell membrane. It carries out the reaction ATP + protein L-histidine = ADP + protein N-phospho-L-histidine.. Its function is as follows. Probable member of the two-component regulatory system YxjM/YxjL. May activate YxjL by phosphorylation. The sequence is that of Sensor histidine kinase YxjM (yxjM) from Bacillus subtilis (strain 168).